Consider the following 244-residue polypeptide: Tetraspanin-2A (244 aa).

Residues 1-22 are Cytoplasmic-facing; sequence MGIGYGASDEQLEKQIGCVKYT. The chain crosses the membrane as a helical span at residues 23–43; it reads LFCFNIVAWMISTALFALTVW. The Extracellular segment spans residues 44 to 61; sequence LRAEPGFNDWLRILEAQS. A helical transmembrane segment spans residues 62 to 82; the sequence is FYIGVYVLIGISIVMMAVSFL. At 83 to 91 the chain is on the cytoplasmic side; the sequence is GCLSALMEN. Residues 92 to 112 traverse the membrane as a helical segment; the sequence is TLALFVFVGTQVFGFIAIVAG. Residues 113 to 206 lie on the Extracellular side of the membrane; the sequence is SAVLLQFSTI…TWFFEGKTGW (94 aa). A helical transmembrane segment spans residues 207-227; it reads IVALAMTLGLLNVICAVMSFV. Topologically, residues 228–244 are cytoplasmic; that stretch reads LVQAVKKEEEQASNYRR.

This sequence belongs to the tetraspanin (TM4SF) family. In terms of assembly, forms a complex with Ssk and mesh.

Its subcellular location is the apicolateral cell membrane. It localises to the cell junction. The protein localises to the septate junction. Required for assembly of smooth septate junctions (sSJs), together with Ssk and mesh. Important for barrier function of the midgut epithelium. The sequence is that of Tetraspanin-2A from Drosophila melanogaster (Fruit fly).